We begin with the raw amino-acid sequence, 187 residues long: Peptidoglycan-recognition protein 2 (187 aa).

The first 19 residues, 1–19, serve as a signal peptide directing secretion; sequence MKAFLVALVVAIELTLVFA. Intrachain disulfides connect Cys21-Cys144 and Cys58-Cys64. Positions 43–170 constitute an N-acetylmuramoyl-L-alanine amidase domain; the sequence is KPLKYVIIHH…RTVRPTDSPG (128 aa).

The protein belongs to the N-acetylmuramoyl-L-alanine amidase 2 family. As to expression, localizes to plasma (at protein level).

It localises to the secreted. Peptidoglycan-recognition protein probably involved in innate immunity by binding to peptidoglycans (PGN) of bacteria and activating the prophenoloxidase (proPO) cascade immune response. Binds to 1,3-beta-D-glucan and PGN. The sequence is that of Peptidoglycan-recognition protein 2 (PGRP-2) from Holotrichia diomphalia (Korean black chafer).